A 684-amino-acid polypeptide reads, in one-letter code: Actin-related protein 5 (684 aa).

The stretch at 262–469 (KEKSVIIQLP…ARQKQKQKAN (208 aa)) forms a coiled coil. 2 disordered regions span residues 392-443 (KEKK…PEHY) and 481-500 (VNPT…EDPE). Residues 402–443 (SMKDGRLAQKRKRDEEKEKEKEKEEERDRQEEESFLKDPEHY) show a composition bias toward basic and acidic residues.

The protein belongs to the actin family. ARP5 subfamily. As to quaternary structure, component of the chromatin-remodeling Ino80 complex.

The protein localises to the nucleus. Functionally, proposed core component of the chromatin remodeling Ino80 complex which is involved in transcriptional regulation, DNA replication and probably DNA repair. In Dictyostelium discoideum (Social amoeba), this protein is Actin-related protein 5 (arpE).